Here is a 260-residue protein sequence, read N- to C-terminus: MQALAEQTETKNVYDVLDFNLWYGNNQALKNISLQLKEKHVTAIIGPSGCGKSTFIKTLNLMSRLNPDIRMAGELNFRGENLLTTSMDLAELRKAVGMVFQKPNPFPKSIYENVAYGPRIHGIRKKKELDEIVESSLKGAFLWEEVKDRLNKNALSLSGGQQQRLCIARALATKPEVLLMDEPTSALDPISTTKVEELITSLRDSYTIVIVTHNMQQAARISDETAFFYMGELVEIGPTQRIFSNPEHKRTEDYVSGQFG.

The 248-residue stretch at 8–255 (TETKNVYDVL…PEHKRTEDYV (248 aa)) folds into the ABC transporter domain. 46 to 53 (GPSGCGKS) lines the ATP pocket.

The protein belongs to the ABC transporter superfamily. Phosphate importer (TC 3.A.1.7) family. As to quaternary structure, the complex is composed of two ATP-binding proteins (PstB), two transmembrane proteins (PstC and PstA) and a solute-binding protein (PstS).

The protein localises to the cell membrane. The enzyme catalyses phosphate(out) + ATP + H2O = ADP + 2 phosphate(in) + H(+). Functionally, part of the ABC transporter complex PstSACB involved in phosphate import. Responsible for energy coupling to the transport system. This Shouchella clausii (strain KSM-K16) (Alkalihalobacillus clausii) protein is Phosphate import ATP-binding protein PstB 1.